The following is a 283-amino-acid chain: Protein/nucleic acid deglycase HchA (283 aa).

Zn(2+) is bound by residues histidine 86, glutamate 91, and histidine 123. Cysteine 185 functions as the Nucleophile in the catalytic mechanism.

Belongs to the peptidase C56 family. HchA subfamily. As to quaternary structure, homodimer.

Its subcellular location is the cytoplasm. The catalysed reaction is N(omega)-(1-hydroxy-2-oxopropyl)-L-arginyl-[protein] + H2O = lactate + L-arginyl-[protein] + H(+). It carries out the reaction N(6)-(1-hydroxy-2-oxopropyl)-L-lysyl-[protein] + H2O = lactate + L-lysyl-[protein] + H(+). It catalyses the reaction S-(1-hydroxy-2-oxopropyl)-L-cysteinyl-[protein] + H2O = lactate + L-cysteinyl-[protein] + H(+). The enzyme catalyses N(omega)-(1-hydroxy-2-oxoethyl)-L-arginyl-[protein] + H2O = L-arginyl-[protein] + glycolate + H(+). The catalysed reaction is N(6)-(1-hydroxy-2-oxoethyl)-L-lysyl-[protein] + H2O = glycolate + L-lysyl-[protein] + H(+). It carries out the reaction S-(1-hydroxy-2-oxoethyl)-L-cysteinyl-[protein] + H2O = glycolate + L-cysteinyl-[protein] + H(+). It catalyses the reaction N(2)-(1-hydroxy-2-oxopropyl)-dGTP + H2O = lactate + dGTP + H(+). The enzyme catalyses N(2)-(1-hydroxy-2-oxopropyl)-GTP + H2O = lactate + GTP + H(+). The catalysed reaction is N(2)-(1-hydroxy-2-oxopropyl)-GDP + H2O = lactate + GDP + H(+). It carries out the reaction N(2)-(1-hydroxy-2-oxopropyl)-GMP + H2O = lactate + GMP + H(+). It catalyses the reaction N(2)-(1-hydroxy-2-oxoethyl)-dGTP + H2O = dGTP + glycolate + H(+). The enzyme catalyses N(2)-(1-hydroxy-2-oxoethyl)-GTP + H2O = glycolate + GTP + H(+). The catalysed reaction is N(2)-(1-hydroxy-2-oxoethyl)-GDP + H2O = glycolate + GDP + H(+). It carries out the reaction N(2)-(1-hydroxy-2-oxoethyl)-GMP + H2O = glycolate + GMP + H(+). It catalyses the reaction an N(2)-(1-hydroxy-2-oxopropyl)-guanosine in RNA + H2O = a guanosine in RNA + lactate + H(+). The enzyme catalyses an N(2)-(1-hydroxy-2-oxopropyl)-2'-deoxyguanosine in DNA + H2O = a 2'-deoxyguanosine in DNA + lactate + H(+). The catalysed reaction is an N(2)-(1-hydroxy-2-oxoethyl)-guanosine in RNA + H2O = a guanosine in RNA + glycolate + H(+). It carries out the reaction an N(2)-(1-hydroxy-2-oxoethyl)-2'-deoxyguanosine in DNA + H2O = a 2'-deoxyguanosine in DNA + glycolate + H(+). Protein and nucleotide deglycase that catalyzes the deglycation of the Maillard adducts formed between amino groups of proteins or nucleotides and reactive carbonyl groups of glyoxals. Thus, functions as a protein deglycase that repairs methylglyoxal- and glyoxal-glycated proteins, and releases repaired proteins and lactate or glycolate, respectively. Deglycates cysteine, arginine and lysine residues in proteins, and thus reactivates these proteins by reversing glycation by glyoxals. Acts on early glycation intermediates (hemithioacetals and aminocarbinols), preventing the formation of Schiff bases and advanced glycation endproducts (AGE). Also functions as a nucleotide deglycase able to repair glycated guanine in the free nucleotide pool (GTP, GDP, GMP, dGTP) and in DNA and RNA. Is thus involved in a major nucleotide repair system named guanine glycation repair (GG repair), dedicated to reversing methylglyoxal and glyoxal damage via nucleotide sanitization and direct nucleic acid repair. Plays an important role in protecting cells from carbonyl stress. The sequence is that of Protein/nucleic acid deglycase HchA from Shigella sonnei (strain Ss046).